The primary structure comprises 2210 residues: RNA-directed RNA polymerase L (2210 aa).

An endonuclease region spans residues 26 to 287; it reads KLNFLGQREP…ADSDDILTLS (262 aa). Glu51, Asp89, and Glu102 together coordinate Mn(2+). Lys115 is an active-site residue. The RdRp catalytic domain occupies 1166 to 1360; that stretch reads LSMTINVREG…HLSGLLNKFI (195 aa). Asp1322 is a Mg(2+) binding site.

The protein belongs to the Bunyavirales RNA polymerase family. Homomultimer; the oligomeric structure is essential for the polymerase activity. Interacts with nucleoprotein N. Interacts with protein Z; this interaction inhibits viral transcription and replication, Z partially blocks the product exit tunnel for the releasing nascent RNA product. The cofactor is Mn(2+). Requires Mg(2+) as cofactor.

The protein resides in the virion. It localises to the host cytoplasm. It carries out the reaction RNA(n) + a ribonucleoside 5'-triphosphate = RNA(n+1) + diphosphate. In terms of biological role, RNA-dependent RNA polymerase, which is responsible for the replication and transcription of the viral RNA genome using antigenomic RNA as an intermediate. During transcription, synthesizes subgenomic RNAs and assures their capping by a cap-snatching mechanism, which involves the endonuclease activity cleaving the host capped pre-mRNAs. These short capped RNAs are then used as primers for viral transcription. The 3'-end of subgenomic mRNAs molecules are heterogeneous and not polyadenylated. The replicase function is to direct synthesis of antigenomic and genomic RNA which are encapsidated and non capped. As a consequence of the use of the same enzyme for both transcription and replication, these mechanisms need to be well coordinated. These processes may be regulated by proteins N and Z in a dose-dependent manner. Z protein inhibits the viral polymerase L und thus the viral transcription and RNA synthesis. In Homo sapiens (Human), this protein is RNA-directed RNA polymerase L.